Reading from the N-terminus, the 248-residue chain is Ubiquinone/menaquinone biosynthesis C-methyltransferase UbiE (248 aa).

2 residues coordinate S-adenosyl-L-methionine: S68 and D92.

It belongs to the class I-like SAM-binding methyltransferase superfamily. MenG/UbiE family.

It catalyses the reaction a 2-demethylmenaquinol + S-adenosyl-L-methionine = a menaquinol + S-adenosyl-L-homocysteine + H(+). The catalysed reaction is a 2-methoxy-6-(all-trans-polyprenyl)benzene-1,4-diol + S-adenosyl-L-methionine = a 5-methoxy-2-methyl-3-(all-trans-polyprenyl)benzene-1,4-diol + S-adenosyl-L-homocysteine + H(+). It participates in quinol/quinone metabolism; menaquinone biosynthesis; menaquinol from 1,4-dihydroxy-2-naphthoate: step 2/2. The protein operates within cofactor biosynthesis; ubiquinone biosynthesis. In terms of biological role, methyltransferase required for the conversion of demethylmenaquinol (DMKH2) to menaquinol (MKH2) and the conversion of 2-polyprenyl-6-methoxy-1,4-benzoquinol (DDMQH2) to 2-polyprenyl-3-methyl-6-methoxy-1,4-benzoquinol (DMQH2). This is Ubiquinone/menaquinone biosynthesis C-methyltransferase UbiE from Rickettsia peacockii (strain Rustic).